A 90-amino-acid polypeptide reads, in one-letter code: DNA-directed RNA polymerase subunit omega (90 aa).

The tract at residues 69-90 is disordered; that stretch reads RQEQQEQEAAELAAVSSIARNR.

The protein belongs to the RNA polymerase subunit omega family. In terms of assembly, the RNAP catalytic core consists of 2 alpha, 1 beta, 1 beta' and 1 omega subunit. When a sigma factor is associated with the core the holoenzyme is formed, which can initiate transcription.

The catalysed reaction is RNA(n) + a ribonucleoside 5'-triphosphate = RNA(n+1) + diphosphate. In terms of biological role, promotes RNA polymerase assembly. Latches the N- and C-terminal regions of the beta' subunit thereby facilitating its interaction with the beta and alpha subunits. The protein is DNA-directed RNA polymerase subunit omega of Vibrio vulnificus (strain CMCP6).